We begin with the raw amino-acid sequence, 589 residues long: Cytoplasmic polyadenylation element-binding protein 2 (589 aa).

2 disordered regions span residues Met-1–Ala-103 and Pro-118–Trp-140. Residues Phe-24–Pro-33 are compositionally biased toward low complexity. Over residues Ser-44–Gly-53 the composition is skewed to gly residues. Residues Val-60–Pro-81 show a composition bias toward pro residues. Composition is skewed to low complexity over residues Gln-82–Ala-103 and Ser-130–Trp-140. At Ser-89 the chain carries Phosphoserine. 2 consecutive RRM domains span residues Arg-332–Leu-423 and Lys-440–Leu-522.

The protein belongs to the RRM CPEB family. As to quaternary structure, interacts with TENT2/GLD2.

Its subcellular location is the cytoplasm. Functionally, may play a role in translational regulation of stored mRNAs in transcriptionally inactive haploid spermatids. Binds to poly(U) RNA oligomers. Required for cell cycle progression, specifically for the transition from metaphase to anaphase. This chain is Cytoplasmic polyadenylation element-binding protein 2 (CPEB2), found in Homo sapiens (Human).